The primary structure comprises 74 residues: Conotoxin TsMLCL-04 (74 aa).

The N-terminal stretch at 1 to 19 is a signal peptide; the sequence is MLCLPVFIILLLLASPAAP. Residues 20–60 constitute a propeptide that is removed on maturation; sequence NPLETRIQRDLIRAALEDADMKTNERFLEGVISTIKDFAGK.

It belongs to the conotoxin T superfamily. Contains 2 disulfide bonds that can be either 'C1-C3, C2-C4' or 'C1-C4, C2-C3', since these disulfide connectivities have been observed for conotoxins with cysteine framework V (for examples, see AC P0DQQ7 and AC P81755). As to expression, expressed by the venom duct.

The protein resides in the secreted. The polypeptide is Conotoxin TsMLCL-04 (Conus tessulatus (Tessellate cone)).